A 278-amino-acid polypeptide reads, in one-letter code: ATP-dependent dethiobiotin synthetase BioD 1 (278 aa).

Asparagine 51–isoleucine 56 contacts ATP. Position 55 (threonine 55) interacts with Mg(2+). Residue lysine 76 is part of the active site. Position 102 (aspartate 102) interacts with ATP. Mg(2+) is bound by residues aspartate 102 and glutamate 163. ATP-binding positions include asparagine 223–arginine 224 and proline 252–isoleucine 254.

The protein belongs to the dethiobiotin synthetase family. In terms of assembly, homodimer. The cofactor is Mg(2+).

The protein resides in the cytoplasm. The enzyme catalyses (7R,8S)-7,8-diammoniononanoate + CO2 + ATP = (4R,5S)-dethiobiotin + ADP + phosphate + 3 H(+). Its pathway is cofactor biosynthesis; biotin biosynthesis; biotin from 7,8-diaminononanoate: step 1/2. Functionally, catalyzes a mechanistically unusual reaction, the ATP-dependent insertion of CO2 between the N7 and N8 nitrogen atoms of 7,8-diaminopelargonic acid (DAPA, also called 7,8-diammoniononanoate) to form a ureido ring. The sequence is that of ATP-dependent dethiobiotin synthetase BioD 1 from Haemophilus ducreyi (strain 35000HP / ATCC 700724).